A 177-amino-acid chain; its full sequence is uncharacterized protein (177 aa).

A disordered region spans residues 122-177; sequence LPFTRNGSGQQSNKLRDPKKGRTHKPKPSEKHKKNKTGKKGAQEKTHRSRSSRKGN. Composition is skewed to basic residues over residues 142 to 160 and 168 to 177; these read GRTHKPKPSEKHKKNKTGK and HRSRSSRKGN.

This is an uncharacterized protein from Saccharomyces cerevisiae (strain ATCC 204508 / S288c) (Baker's yeast).